Consider the following 368-residue polypeptide: Chaperone protein DnaJ (368 aa).

One can recognise a J domain in the interval 5–70 (DYYQVLGVPR…KKRKLYDTHG (66 aa)). Residues 124–201 (GVERQIQIPT…CNGAGRVEDH (78 aa)) form a CR-type zinc finger. 8 residues coordinate Zn(2+): cysteine 137, cysteine 140, cysteine 153, cysteine 156, cysteine 175, cysteine 178, cysteine 189, and cysteine 192. 4 CXXCXGXG motif repeats span residues 137–144 (CTHCHGSG), 153–160 (CGTCRGSG), 175–182 (CPHCGGRG), and 189–196 (CKVCNGAG).

Belongs to the DnaJ family. In terms of assembly, homodimer. Requires Zn(2+) as cofactor.

The protein localises to the cytoplasm. Its function is as follows. Participates actively in the response to hyperosmotic and heat shock by preventing the aggregation of stress-denatured proteins and by disaggregating proteins, also in an autonomous, DnaK-independent fashion. Unfolded proteins bind initially to DnaJ; upon interaction with the DnaJ-bound protein, DnaK hydrolyzes its bound ATP, resulting in the formation of a stable complex. GrpE releases ADP from DnaK; ATP binding to DnaK triggers the release of the substrate protein, thus completing the reaction cycle. Several rounds of ATP-dependent interactions between DnaJ, DnaK and GrpE are required for fully efficient folding. Also involved, together with DnaK and GrpE, in the DNA replication of plasmids through activation of initiation proteins. The protein is Chaperone protein DnaJ of Xylella fastidiosa (strain M23).